Reading from the N-terminus, the 301-residue chain is Diaminopimelate epimerase (301 aa).

Positions 15, 47, and 67 each coordinate substrate. Cys-76 acts as the Proton donor in catalysis. Residues 77–78, Asn-163, Asn-197, and 215–216 each bind substrate; these read GN and ER. The active-site Proton acceptor is Cys-224. Substrate is bound at residue 225 to 226; sequence GS. The segment at 280-301 is disordered; the sequence is SGSLDPSTGLWSRDGTQEAGAR.

It belongs to the diaminopimelate epimerase family. Homodimer.

The protein resides in the cytoplasm. The enzyme catalyses (2S,6S)-2,6-diaminopimelate = meso-2,6-diaminopimelate. Its pathway is amino-acid biosynthesis; L-lysine biosynthesis via DAP pathway; DL-2,6-diaminopimelate from LL-2,6-diaminopimelate: step 1/1. Its function is as follows. Catalyzes the stereoinversion of LL-2,6-diaminopimelate (L,L-DAP) to meso-diaminopimelate (meso-DAP), a precursor of L-lysine and an essential component of the bacterial peptidoglycan. The protein is Diaminopimelate epimerase of Rhizobium leguminosarum bv. trifolii (strain WSM2304).